The chain runs to 492 residues: Ketol-acid reductoisomerase (NADP(+)) (492 aa).

A KARI N-terminal Rossmann domain is found at Leu14–Ser208. Residues Cys45 to Gln48, Arg68, Arg76, Ser78, and Asp108 to Gln110 contribute to the NADP(+) site. Residue His132 is part of the active site. Residue Gly158 coordinates NADP(+). 2 KARI C-terminal knotted domains span residues Ser209 to Lys344 and Tyr345 to Met485. Residues Asp217, Glu221, Glu389, and Glu393 each contribute to the Mg(2+) site. Ser414 is a binding site for substrate.

It belongs to the ketol-acid reductoisomerase family. The cofactor is Mg(2+).

The enzyme catalyses (2R)-2,3-dihydroxy-3-methylbutanoate + NADP(+) = (2S)-2-acetolactate + NADPH + H(+). It catalyses the reaction (2R,3R)-2,3-dihydroxy-3-methylpentanoate + NADP(+) = (S)-2-ethyl-2-hydroxy-3-oxobutanoate + NADPH + H(+). The protein operates within amino-acid biosynthesis; L-isoleucine biosynthesis; L-isoleucine from 2-oxobutanoate: step 2/4. Its pathway is amino-acid biosynthesis; L-valine biosynthesis; L-valine from pyruvate: step 2/4. Functionally, involved in the biosynthesis of branched-chain amino acids (BCAA). Catalyzes an alkyl-migration followed by a ketol-acid reduction of (S)-2-acetolactate (S2AL) to yield (R)-2,3-dihydroxy-isovalerate. In the isomerase reaction, S2AL is rearranged via a Mg-dependent methyl migration to produce 3-hydroxy-3-methyl-2-ketobutyrate (HMKB). In the reductase reaction, this 2-ketoacid undergoes a metal-dependent reduction by NADPH to yield (R)-2,3-dihydroxy-isovalerate. The polypeptide is Ketol-acid reductoisomerase (NADP(+)) (Haemophilus influenzae (strain PittEE)).